A 1483-amino-acid polypeptide reads, in one-letter code: Heme-responsive zinc finger transcription factor HAP1 (1483 aa).

Over residues 1-50 (MSNTPYNSSVPSIASMTQSSVSRSPNMHTATTPGANTSSNSPPLHMSSDS) the composition is skewed to polar residues. The disordered stretch occupies residues 1-56 (MSNTPYNSSVPSIASMTQSSVSRSPNMHTATTPGANTSSNSPPLHMSSDSSKIKRK). Positions 64, 67, 74, 81, 84, and 93 each coordinate Zn(2+). The segment at residues 64–93 (CTICRKRKVKCDKLRPHCQQCTKTGVAHLC) is a DNA-binding region (zn(2)-C6 fungal-type). Residues 105–134 (EKELLKDNELKKLRERVKSLEKTLSKVHSS) are a coiled coil. Residues 126-208 (KTLSKVHSSP…ANSSSLSISN (83 aa)) are disordered. The span at 130–142 (KVHSSPSSNSLKS) shows a compositional bias: low complexity. Polar residues-rich tracts occupy residues 143–152 (YNTPESSNLF) and 160–176 (TLVNANTGSASSASHMH). The span at 177-208 (QQQQQQQQQEQQQDFSRSANANANSSSLSISN) shows a compositional bias: low complexity. Residues 244–444 (KGDPYLKLLW…NTIPHHQPQS (201 aa)) are heme-responsive; required for HMC formation. 6 HRM repeats span residues 280–285 (KCPINH), 299–304 (KCPVDH), 323–328 (KCPVDH), 347–352 (RCPVDH), 389–394 (KCPVDH), and 415–420 (RCPIDH). Polar residues-rich tracts occupy residues 432 to 447 (STHNTIPHHQPQSGSH) and 706 to 734 (QLNATIPATSQDVSNNGSKKANPSTNPTL). Disordered stretches follow at residues 432-458 (STHNTIPHHQPQSGSHARSHPAQSRKH) and 706-767 (QLNA…KENQ). Residues 735–759 (NNNMSAATTNSSSRSGSADSRSGSN) show a composition bias toward low complexity. An HRM 7 repeat occupies 1192-1197 (KCPVYQ). Residues 1384-1411 (TANTDTSANGSALSTLTSPQGSDLASNS) are disordered. Positions 1388–1411 (DTSANGSALSTLTSPQGSDLASNS) are enriched in polar residues.

Binds DNA as a homodimer. Interacts with SRO9 and YDJ1. In the absence of heme, binds to at least four cellular proteins, including YDJ1 and SRO9, forming a high-molecular-weight complex (HMC) which results in repression of its activity and dictates its DNA-binding specificity.

The protein localises to the nucleus. Its function is as follows. Regulation of oxygen dependent gene expression. It modulates the expression of Iso-1 (CYP1) and Iso-2 (CYP3) cytochrome c. In response to heme, promotes transcription of genes encoding functions required for respiration, controlling oxidative damage and repression of anaerobic genes. Binds to the sequence 5'-CGGNNNTNNCGG-3'. Is non-functional in terms of iso-1 cytochrome c expression in strain S288c and its derivatives. The chain is Heme-responsive zinc finger transcription factor HAP1 (HAP1) from Saccharomyces cerevisiae (Baker's yeast).